A 341-amino-acid polypeptide reads, in one-letter code: Uroporphyrinogen decarboxylase (341 aa).

Substrate contacts are provided by residues 23 to 27 (RQAGR), Asp73, Tyr147, Ser202, and His318.

This sequence belongs to the uroporphyrinogen decarboxylase family. As to quaternary structure, homodimer.

The protein resides in the cytoplasm. The catalysed reaction is uroporphyrinogen III + 4 H(+) = coproporphyrinogen III + 4 CO2. It participates in porphyrin-containing compound metabolism; protoporphyrin-IX biosynthesis; coproporphyrinogen-III from 5-aminolevulinate: step 4/4. Its function is as follows. Catalyzes the decarboxylation of four acetate groups of uroporphyrinogen-III to yield coproporphyrinogen-III. In Novosphingobium aromaticivorans (strain ATCC 700278 / DSM 12444 / CCUG 56034 / CIP 105152 / NBRC 16084 / F199), this protein is Uroporphyrinogen decarboxylase.